Consider the following 156-residue polypeptide: 3-dehydroquinate dehydratase (156 aa).

Tyr31 acts as the Proton acceptor in catalysis. 3 residues coordinate substrate: Asn83, His89, and Asp96. Residue His109 is the Proton donor of the active site. Substrate contacts are provided by residues 110 to 111 (LS) and Arg120.

This sequence belongs to the type-II 3-dehydroquinase family. As to quaternary structure, homododecamer.

It catalyses the reaction 3-dehydroquinate = 3-dehydroshikimate + H2O. It functions in the pathway metabolic intermediate biosynthesis; chorismate biosynthesis; chorismate from D-erythrose 4-phosphate and phosphoenolpyruvate: step 3/7. Functionally, catalyzes a trans-dehydration via an enolate intermediate. The sequence is that of 3-dehydroquinate dehydratase from Chromobacterium violaceum (strain ATCC 12472 / DSM 30191 / JCM 1249 / CCUG 213 / NBRC 12614 / NCIMB 9131 / NCTC 9757 / MK).